The chain runs to 365 residues: NAD(P)H-quinone oxidoreductase subunit 1, chloroplastic (365 aa).

The next 6 membrane-spanning stretches (helical) occupy residues 29-49 (IWLLVPIFTLILVIIIGVLVI), 106-126 (IAVISTLLSYLVIPFGYHLVL), 129-149 (LSIGVFLWIAISSIAPIGLLM), 250-270 (YSGIKFGLFYVASYLNLLVSS), 302-322 (IFGMTIGILITLAKAYLFLFI), and 338-358 (LLNLGWKFLLPISLGNLLLTT).

The protein belongs to the complex I subunit 1 family. In terms of assembly, NDH is composed of at least 16 different subunits, 5 of which are encoded in the nucleus.

It localises to the plastid. Its subcellular location is the chloroplast thylakoid membrane. The catalysed reaction is a plastoquinone + NADH + (n+1) H(+)(in) = a plastoquinol + NAD(+) + n H(+)(out). It carries out the reaction a plastoquinone + NADPH + (n+1) H(+)(in) = a plastoquinol + NADP(+) + n H(+)(out). NDH shuttles electrons from NAD(P)H:plastoquinone, via FMN and iron-sulfur (Fe-S) centers, to quinones in the photosynthetic chain and possibly in a chloroplast respiratory chain. The immediate electron acceptor for the enzyme in this species is believed to be plastoquinone. Couples the redox reaction to proton translocation, and thus conserves the redox energy in a proton gradient. The sequence is that of NAD(P)H-quinone oxidoreductase subunit 1, chloroplastic from Acorus calamus (Sweet flag).